Consider the following 428-residue polypeptide: Histidine--tRNA ligase (428 aa).

It belongs to the class-II aminoacyl-tRNA synthetase family. In terms of assembly, homodimer.

The protein resides in the cytoplasm. It carries out the reaction tRNA(His) + L-histidine + ATP = L-histidyl-tRNA(His) + AMP + diphosphate + H(+). The chain is Histidine--tRNA ligase from Chlamydia trachomatis serovar A (strain ATCC VR-571B / DSM 19440 / HAR-13).